The primary structure comprises 392 residues: Aspartate aminotransferase (392 aa).

The L-aspartate site is built by Gly-40, Trp-126, and Asn-176. N6-(pyridoxal phosphate)lysine is present on Lys-239.

This sequence belongs to the class-I pyridoxal-phosphate-dependent aminotransferase family. Homodimer. The cofactor is pyridoxal 5'-phosphate.

It is found in the cytoplasm. The enzyme catalyses L-aspartate + 2-oxoglutarate = oxaloacetate + L-glutamate. This Bacillus sp. (strain YM-2) protein is Aspartate aminotransferase.